Consider the following 66-residue polypeptide: Potassium channel toxin alpha-KTx 27.3 (66 aa).

A signal peptide spans 1 to 17 (MKLMWLLFLCVLAFSIA).

The protein belongs to the short scorpion toxin superfamily. Potassium channel inhibitor family. Alpha-KTx 27 subfamily. Post-translationally, contains 4 disulfide bonds. As to expression, expressed by the venom gland.

It localises to the secreted. This chain is Potassium channel toxin alpha-KTx 27.3, found in Lychas mucronatus (Chinese swimming scorpion).